We begin with the raw amino-acid sequence, 327 residues long: Probable cell division protein WhiA (327 aa).

Positions 277-310 (EELGRLADPPMTKDAVAGRIRRLLSMADRKAKQD) form a DNA-binding region, H-T-H motif. Positions 304–327 (DRKAKQDGIPDTESAVTPDLLEDA) are disordered.

Belongs to the WhiA family.

Involved in cell division and chromosome segregation. This chain is Probable cell division protein WhiA, found in Mycolicibacterium vanbaalenii (strain DSM 7251 / JCM 13017 / BCRC 16820 / KCTC 9966 / NRRL B-24157 / PYR-1) (Mycobacterium vanbaalenii).